Here is a 157-residue protein sequence, read N- to C-terminus: SsrA-binding protein (157 aa).

The protein belongs to the SmpB family.

The protein resides in the cytoplasm. Its function is as follows. Required for rescue of stalled ribosomes mediated by trans-translation. Binds to transfer-messenger RNA (tmRNA), required for stable association of tmRNA with ribosomes. tmRNA and SmpB together mimic tRNA shape, replacing the anticodon stem-loop with SmpB. tmRNA is encoded by the ssrA gene; the 2 termini fold to resemble tRNA(Ala) and it encodes a 'tag peptide', a short internal open reading frame. During trans-translation Ala-aminoacylated tmRNA acts like a tRNA, entering the A-site of stalled ribosomes, displacing the stalled mRNA. The ribosome then switches to translate the ORF on the tmRNA; the nascent peptide is terminated with the 'tag peptide' encoded by the tmRNA and targeted for degradation. The ribosome is freed to recommence translation, which seems to be the essential function of trans-translation. The sequence is that of SsrA-binding protein from Rhodococcus jostii (strain RHA1).